A 212-amino-acid polypeptide reads, in one-letter code: Regulatory protein RecX (212 aa).

Belongs to the RecX family.

Its subcellular location is the cytoplasm. In terms of biological role, modulates RecA activity. This chain is Regulatory protein RecX, found in Clostridium perfringens (strain SM101 / Type A).